Reading from the N-terminus, the 211-residue chain is RING finger protein narya (211 aa).

An RING-type zinc finger spans residues 6-47; the sequence is CNKCFRHRKTDPAVPFHLTQCRHVICGPCLGQSSLEKNCPLC. Residues 149–211 are disordered; it reads RRRHSAGERF…FGSDTKGFRL (63 aa). Over residues 153 to 165 the composition is skewed to basic and acidic residues; it reads SAGERFHTPEFKE. Residues 172-184 show a composition bias toward low complexity; the sequence is STSDKSPSDMPSD.

May interact with itself, with nenya and vilya through its RING-type zinc finger. In terms of tissue distribution, expressed in nurse cell and pro-oocytes (at protein level).

The protein localises to the chromosome. In terms of biological role, required for the formation of DNA double-strand breaks (DSBs) together with nenya and vilya during the meiotic recombination process. Plays a role in DSBs processing into crossovers. Plays a redundant role with nenya in chromosome segregation during female meiosis. The sequence is that of RING finger protein narya from Drosophila melanogaster (Fruit fly).